Here is a 389-residue protein sequence, read N- to C-terminus: Dual-specificity RNA methyltransferase RlmN (389 aa).

Residue E94 is the Proton acceptor of the active site. One can recognise a Radical SAM core domain in the interval 134 to 367 (PRVRVTQCIS…CFVRRRRGDD (234 aa)). A disulfide bridge links C141 with C372. Positions 148, 152, and 155 each coordinate [4Fe-4S] cluster. Residues 197–198 (GE), S229, 253–255 (SLH), and N329 each bind S-adenosyl-L-methionine. Catalysis depends on C372, which acts as the S-methylcysteine intermediate.

It belongs to the radical SAM superfamily. RlmN family. The cofactor is [4Fe-4S] cluster.

Its subcellular location is the cytoplasm. The enzyme catalyses adenosine(2503) in 23S rRNA + 2 reduced [2Fe-2S]-[ferredoxin] + 2 S-adenosyl-L-methionine = 2-methyladenosine(2503) in 23S rRNA + 5'-deoxyadenosine + L-methionine + 2 oxidized [2Fe-2S]-[ferredoxin] + S-adenosyl-L-homocysteine. It catalyses the reaction adenosine(37) in tRNA + 2 reduced [2Fe-2S]-[ferredoxin] + 2 S-adenosyl-L-methionine = 2-methyladenosine(37) in tRNA + 5'-deoxyadenosine + L-methionine + 2 oxidized [2Fe-2S]-[ferredoxin] + S-adenosyl-L-homocysteine. In terms of biological role, specifically methylates position 2 of adenine 2503 in 23S rRNA and position 2 of adenine 37 in tRNAs. m2A2503 modification seems to play a crucial role in the proofreading step occurring at the peptidyl transferase center and thus would serve to optimize ribosomal fidelity. The protein is Dual-specificity RNA methyltransferase RlmN of Sorangium cellulosum (strain So ce56) (Polyangium cellulosum (strain So ce56)).